Consider the following 781-residue polypeptide: Transcription factor Sp3 (781 aa).

The span at 1–12 shows a compositional bias: basic and acidic residues; that stretch reads MTAPEKPVKQEE. 2 disordered regions span residues 1 to 53 and 65 to 88; these read MTAP…AAQD and TCSKIGPPSPGDDEEEAAAAAGAP. Residues 20–31 are compositionally biased toward gly residues; the sequence is SGGGGGGGGGHG. The span at 32–53 shows a compositional bias: low complexity; sequence EYLQQQQQHGNGAVAAAAAAQD. Serine 73 is modified (phosphoserine). Lysine 120 is covalently cross-linked (Glycyl lysine isopeptide (Lys-Gly) (interchain with G-Cter in SUMO)). Residues 138–237 are transactivation domain (Gln-rich); sequence QYVLPLQNLQ…IPQTGQVQVQ (100 aa). A disordered region spans residues 301-338; it reads QAMDSSDNSERTGERVSPDINETNTDTDLFVPTSSSSQ. The span at 308-317 shows a compositional bias: basic and acidic residues; the sequence is NSERTGERVS. The segment covering 320–338 has biased composition (polar residues); the sequence is INETNTDTDLFVPTSSSSQ. The segment at 350 to 499 is transactivation domain (Gln-rich); that stretch reads QQNTNSLTTS…TPVQTLTLGQ (150 aa). Positions 461 to 469 match the 9aaTAD motif; sequence VTWQTFQVQ. The repressor domain stretch occupies residues 534-620; it reads IQLHPGENAD…RGTNLGKKKQ (87 aa). The residue at position 551 (lysine 551) is an N6-acetyllysine; alternate. Lysine 551 is covalently cross-linked (Glycyl lysine isopeptide (Lys-Gly) (interchain with G-Cter in SUMO); alternate). Residue lysine 551 forms a Glycyl lysine isopeptide (Lys-Gly) (interchain with G-Cter in SUMO1); alternate linkage. Lysine 551 participates in a covalent cross-link: Glycyl lysine isopeptide (Lys-Gly) (interchain with G-Cter in SUMO2); alternate. Phosphoserine occurs at positions 563 and 566. Lysine 593 participates in a covalent cross-link: Glycyl lysine isopeptide (Lys-Gly) (interchain with G-Cter in SUMO2). Residues 621–645 form a C2H2-type 1 zinc finger; that stretch reads HICHIPGCGKVYGKTSHLRAHLRWH. Position 646 is a phosphoserine (serine 646). 2 consecutive C2H2-type zinc fingers follow at residues 651-675 and 681-703; these read FVCNWMYCGKRFTRSDELQRHRRTH and FVCPECSKRFMRSDHLAKHIKTH.

Belongs to the Sp1 C2H2-type zinc-finger protein family. Interacts with HLTF; the interaction may be required for basal transcriptional activity of HLTF. Interacts with HDAC1; the interaction deacetylates SP3 and regulates its transcriptional activity. Interacts with HDAC2 (preferably the CK2-phosphorylated form); the interaction deacetylates SP3 and regulates its transcriptional activity. Interacts with MEIS2 isoform 4 and PBX1 isoform PBX1a. Not glycosylated. In terms of processing, acetylated by histone acetyltransferase p300, deacetylated by HDACs. Acetylation/deacetylation states regulate transcriptional activity. Acetylation appears to activate transcription. Alternate sumoylation and acetylation at Lys-551 also control transcriptional activity. Ceramides can also regulate acetylation/deacetylation events through altering the interaction of HDAC with SP3. In vitro, C(18)-ceramides, but not C(16)-ceramides, increase the interaction of HDAC1 with SP3 and enhance the deacetylation of SP3 and the subsequent repression of the TERT promoter. Post-translationally, sumoylated on all isoforms. Sumoylated on 2 sites in longer isoforms with Lys-551 being the major site. Sumoylation at this site promotes nuclear localization to the nuclear periphery, nuclear dots and PML nuclear bodies. Sumoylation on Lys-551 represses the transactivation activity, except for the largest isoform, L-Sp3, which has little effect on transactivation. Alternate sumoylation and acetylation at Lys-551 also control transcriptional activity. Ubiquitously expressed.

Its subcellular location is the nucleus. The protein resides in the PML body. Transcriptional factor that can act as an activator or repressor depending on isoform and/or post-translational modifications. Binds to GT and GC boxes promoter elements. Competes with SP1 for the GC-box promoters. Weak activator of transcription but can activate a number of genes involved in different processes such as cell-cycle regulation, hormone-induction and house-keeping. This chain is Transcription factor Sp3 (SP3), found in Homo sapiens (Human).